We begin with the raw amino-acid sequence, 714 residues long: Polyribonucleotide nucleotidyltransferase (714 aa).

Residues Asp-487 and Asp-493 each coordinate Mg(2+). Residues 554 to 613 form the KH domain; that stretch reads PRIETLKIPTDKIREVIGTGGKVIREIVEKTGAKINIEDDGTVKVASSDGNSIKAAIAWI. In terms of domain architecture, S1 motif spans 623 to 691; sequence GQIYEGTVVK…DRGKVRLSMR (69 aa).

The protein belongs to the polyribonucleotide nucleotidyltransferase family. The cofactor is Mg(2+).

It localises to the cytoplasm. The enzyme catalyses RNA(n+1) + phosphate = RNA(n) + a ribonucleoside 5'-diphosphate. Its function is as follows. Involved in mRNA degradation. Catalyzes the phosphorolysis of single-stranded polyribonucleotides processively in the 3'- to 5'-direction. The protein is Polyribonucleotide nucleotidyltransferase of Methylocella silvestris (strain DSM 15510 / CIP 108128 / LMG 27833 / NCIMB 13906 / BL2).